The sequence spans 118 residues: MSQGPPAVSVLQRSVDAPGNQPQSPKDDDRKVRRREKNRVAAQRSRKKQTQKADKLHEEHESLEQENSVLRREISKLKEELRHLSEVLKEHEKMCPLLLCPMNFVQLRSDPVASCLPR.

Residues 1 to 69 form a disordered region; sequence MSQGPPAVSV…HESLEQENSV (69 aa). Phosphoserine is present on residues serine 2 and serine 24. Positions 28–91 constitute a bZIP domain; sequence DDRKVRRREK…RHLSEVLKEH (64 aa). Residues 30–55 form a basic motif region; it reads RKVRRREKNRVAAQRSRKKQTQKADK. The span at 51-69 shows a compositional bias: basic and acidic residues; it reads QKADKLHEEHESLEQENSV. Residues 56-84 are leucine-zipper; that stretch reads LHEEHESLEQENSVLRREISKLKEELRHL.

It belongs to the bZIP family. As to quaternary structure, heterodimer; heterodimerizes with JUN family proteins. Interacts with JUN. In terms of tissue distribution, highly expressed in CD8-alpha(+) classical dendritic cells (cDCs), with low to absent expression in other immune cells and non-immune tissues.

The protein resides in the nucleus. Its function is as follows. AP-1 family transcription factor that controls the differentiation of CD8(+) thymic conventional dendritic cells in the immune system. Acts via the formation of a heterodimer with JUN family proteins that recognizes and binds DNA sequence 5'-TGA[CG]TCA-3' and regulates expression of target genes. Required for development of CD8-alpha(+) classical dendritic cells (cDCs) and related CD103(+) dendritic cells that cross-present antigens to CD8 T-cells and produce interleukin-12 (IL12) in response to pathogens. In Mus musculus (Mouse), this protein is Basic leucine zipper transcriptional factor ATF-like 3 (Batf3).